The following is an 807-amino-acid chain: DNA gyrase subunit B (807 aa).

A Toprim domain is found at 429-543 (SELFIVEGDS…KGYLYIAQPP (115 aa)). Mg(2+) contacts are provided by Glu-435, Asp-508, and Asp-510.

This sequence belongs to the type II topoisomerase GyrB family. In terms of assembly, heterotetramer, composed of two GyrA and two GyrB chains. In the heterotetramer, GyrA contains the active site tyrosine that forms a transient covalent intermediate with DNA, while GyrB binds cofactors and catalyzes ATP hydrolysis. The cofactor is Mg(2+). It depends on Mn(2+) as a cofactor. Ca(2+) is required as a cofactor.

Its subcellular location is the cytoplasm. The enzyme catalyses ATP-dependent breakage, passage and rejoining of double-stranded DNA.. Its function is as follows. A type II topoisomerase that negatively supercoils closed circular double-stranded (ds) DNA in an ATP-dependent manner to modulate DNA topology and maintain chromosomes in an underwound state. Negative supercoiling favors strand separation, and DNA replication, transcription, recombination and repair, all of which involve strand separation. Also able to catalyze the interconversion of other topological isomers of dsDNA rings, including catenanes and knotted rings. Type II topoisomerases break and join 2 DNA strands simultaneously in an ATP-dependent manner. This chain is DNA gyrase subunit B, found in Rickettsia typhi (strain ATCC VR-144 / Wilmington).